Reading from the N-terminus, the 360-residue chain is Chorismate synthase (360 aa).

NADP(+)-binding residues include arginine 48 and arginine 54. Residues 125 to 127 (RSS), 246 to 247 (NA), glycine 286, 301 to 305 (KPTSS), and arginine 327 contribute to the FMN site.

The protein belongs to the chorismate synthase family. In terms of assembly, homotetramer. It depends on FMNH2 as a cofactor.

The catalysed reaction is 5-O-(1-carboxyvinyl)-3-phosphoshikimate = chorismate + phosphate. The protein operates within metabolic intermediate biosynthesis; chorismate biosynthesis; chorismate from D-erythrose 4-phosphate and phosphoenolpyruvate: step 7/7. In terms of biological role, catalyzes the anti-1,4-elimination of the C-3 phosphate and the C-6 proR hydrogen from 5-enolpyruvylshikimate-3-phosphate (EPSP) to yield chorismate, which is the branch point compound that serves as the starting substrate for the three terminal pathways of aromatic amino acid biosynthesis. This reaction introduces a second double bond into the aromatic ring system. The polypeptide is Chorismate synthase (Haemophilus ducreyi (strain 35000HP / ATCC 700724)).